A 135-amino-acid polypeptide reads, in one-letter code: Small ribosomal subunit protein uS11 (135 aa).

This sequence belongs to the universal ribosomal protein uS11 family. In terms of assembly, part of the 30S ribosomal subunit. Interacts with proteins S7 and S18. Binds to IF-3.

Located on the platform of the 30S subunit, it bridges several disparate RNA helices of the 16S rRNA. Forms part of the Shine-Dalgarno cleft in the 70S ribosome. The polypeptide is Small ribosomal subunit protein uS11 (Protochlamydia amoebophila (strain UWE25)).